The chain runs to 41 residues: Virescein (41 aa).

Histidine 41 is modified (histidine amide).

As to quaternary structure, monomer. In terms of tissue distribution, hemolymph.

It is found in the secreted. Its function is as follows. Has antibacterial activity against Gram-positive and Gram-negative bacteria. This chain is Virescein, found in Heliothis virescens (Tobacco budworm moth).